A 535-amino-acid chain; its full sequence is Dual specificity calcium/calmodulin-dependent 3',5'-cyclic nucleotide phosphodiesterase 1B (535 aa).

The interval 1–21 is disordered; the sequence is MELSPRSPPEMLESDCPSPLE. Residues serine 7 and serine 14 each carry the phosphoserine modification. Calmodulin-binding regions lie at residues 26–46 and 117–140; these read PSKK…KQLE and EKPK…MFRR. Residues 145 to 502 enclose the PDEase domain; the sequence is VGPTYSTAVH…QKWKERAASG (358 aa). Histidine 222 acts as the Proton donor in catalysis. 4 residues coordinate Zn(2+): histidine 226, histidine 262, aspartate 263, and aspartate 369. Mg(2+) is bound at residue aspartate 263. 2 disordered regions span residues 445–474 and 495–535; these read PLAD…GDPN and WKER…GNLD. The segment covering 454–463 has biased composition (polar residues); it reads KSQPSFQWRQ. Phosphoserine occurs at positions 465 and 513.

It belongs to the cyclic nucleotide phosphodiesterase family. PDE1 subfamily. As to quaternary structure, homodimer. It depends on Zn(2+) as a cofactor. Mg(2+) serves as cofactor.

Its subcellular location is the cytoplasm. The protein localises to the cytosol. The enzyme catalyses a nucleoside 3',5'-cyclic phosphate + H2O = a nucleoside 5'-phosphate + H(+). It carries out the reaction 3',5'-cyclic GMP + H2O = GMP + H(+). The catalysed reaction is 3',5'-cyclic AMP + H2O = AMP + H(+). With respect to regulation, type I PDE are activated by the binding of calmodulin in the presence of Ca(2+). Cyclic nucleotide phosphodiesterase with a dual specificity for the second messengers cAMP and cGMP, which are key regulators of many important physiological processes. Has a preference for cGMP as a substrate. The polypeptide is Dual specificity calcium/calmodulin-dependent 3',5'-cyclic nucleotide phosphodiesterase 1B (Cricetulus griseus (Chinese hamster)).